The primary structure comprises 275 residues: NH(3)-dependent NAD(+) synthetase (275 aa).

46–53 (GISGGQDS) contacts ATP. Aspartate 52 serves as a coordination point for Mg(2+). Arginine 140 lines the deamido-NAD(+) pocket. Threonine 160 is an ATP binding site. Glutamate 165 contributes to the Mg(2+) binding site. Deamido-NAD(+) is bound by residues lysine 173 and aspartate 180. ATP is bound by residues lysine 189 and threonine 211. 260 to 261 (HK) is a deamido-NAD(+) binding site.

The protein belongs to the NAD synthetase family. In terms of assembly, homodimer.

It carries out the reaction deamido-NAD(+) + NH4(+) + ATP = AMP + diphosphate + NAD(+) + H(+). The protein operates within cofactor biosynthesis; NAD(+) biosynthesis; NAD(+) from deamido-NAD(+) (ammonia route): step 1/1. In terms of biological role, catalyzes the ATP-dependent amidation of deamido-NAD to form NAD. Uses ammonia as a nitrogen source. The polypeptide is NH(3)-dependent NAD(+) synthetase (Shigella boydii serotype 4 (strain Sb227)).